Consider the following 822-residue polypeptide: Stemar-13-ene synthase (822 aa).

A compositionally biased stretch (polar residues) spans 1–10 (MMLLSSSYSG). The tract at residues 1–29 (MMLLSSSYSGGQFPGVSPLGTRPKRSTTV) is disordered. The Mg(2+) site is built by Asp553, Asp557, Asn698, Thr702, and Glu706. The short motif at 553 to 557 (DDLFD) is the DDXXD motif element.

The protein belongs to the terpene synthase family. Requires Mg(2+) as cofactor.

It catalyses the reaction 9alpha-copalyl diphosphate = stemar-13-ene + diphosphate. Catalyzes the conversion of syn-copalyl diphosphate to the phytoalexin precursor stemarene. The sequence is that of Stemar-13-ene synthase (KSL8) from Oryza sativa subsp. japonica (Rice).